The chain runs to 469 residues: ATP synthase subunit beta (469 aa).

153–160 (GGAGVGKT) is a binding site for ATP.

The protein belongs to the ATPase alpha/beta chains family. F-type ATPases have 2 components, CF(1) - the catalytic core - and CF(0) - the membrane proton channel. CF(1) has five subunits: alpha(3), beta(3), gamma(1), delta(1), epsilon(1). CF(0) has three main subunits: a(1), b(2) and c(9-12). The alpha and beta chains form an alternating ring which encloses part of the gamma chain. CF(1) is attached to CF(0) by a central stalk formed by the gamma and epsilon chains, while a peripheral stalk is formed by the delta and b chains.

The protein resides in the cell inner membrane. It catalyses the reaction ATP + H2O + 4 H(+)(in) = ADP + phosphate + 5 H(+)(out). Its function is as follows. Produces ATP from ADP in the presence of a proton gradient across the membrane. The catalytic sites are hosted primarily by the beta subunits. This Pseudothermotoga lettingae (strain ATCC BAA-301 / DSM 14385 / NBRC 107922 / TMO) (Thermotoga lettingae) protein is ATP synthase subunit beta.